A 490-amino-acid polypeptide reads, in one-letter code: Cytochrome P450 2C6 (490 aa).

Lys-249 and Lys-375 each carry N6-acetyllysine. Residue Cys-435 participates in heme binding.

Belongs to the cytochrome P450 family. Heme serves as cofactor.

The protein localises to the endoplasmic reticulum membrane. The protein resides in the microsome membrane. It carries out the reaction an organic molecule + reduced [NADPH--hemoprotein reductase] + O2 = an alcohol + oxidized [NADPH--hemoprotein reductase] + H2O + H(+). Its function is as follows. Cytochromes P450 are a group of heme-thiolate monooxygenases. In liver microsomes, this enzyme is involved in an NADPH-dependent electron transport pathway. It oxidizes a variety of structurally unrelated compounds, including steroids, fatty acids, and xenobiotics. The protein is Cytochrome P450 2C6 (Cyp2c6) of Rattus norvegicus (Rat).